We begin with the raw amino-acid sequence, 321 residues long: Polygalacturonan/rhamnogalacturonan transport system permease protein YteP (321 aa).

The 144-residue stretch at 1–144 (MKTAEAQAPA…YIPHFMSWVI (144 aa)) folds into the ABC transmembrane type-1 domain. Transmembrane regions (helical) follow at residues 21–41 (RKRL…ILPG), 63–83 (YQPF…FIRL), and 123–143 (IALF…MSWV).

The protein belongs to the binding-protein-dependent transport system permease family. As to quaternary structure, the complex is probably composed of two ATP-binding proteins (MsmX), two transmembrane proteins (YtcP and YteP) and a solute-binding protein (YtcQ).

The protein resides in the cell membrane. Its function is as follows. Involved in pectin degradation. Part of the ABC transporter complex YtcQP-YteP involved in the uptake of polygalacturonan and rhamnogalacturonan type I. Responsible for the translocation of the substrate across the membrane. This Bacillus subtilis (strain 168) protein is Polygalacturonan/rhamnogalacturonan transport system permease protein YteP (yteP).